The chain runs to 59 residues: Cytochrome c oxidase subunit 7 (59 aa).

At 1–24 (MKNTIVQQQRFLQSIHKPTYLQRP) the chain is on the mitochondrial matrix side. Residues 25 to 47 (GSFALVYPYYAVMAGLGLYSLYA) traverse the membrane as a helical segment. Over 48 to 59 (SGRVIFGKKDAF) the chain is Mitochondrial intermembrane.

This sequence belongs to the cytochrome c oxidase subunit 7 family. In terms of assembly, component of the cytochrome c oxidase (complex IV, CIV), a multisubunit enzyme composed of a catalytic core of 3 subunits and several supernumerary subunits. The complex exists as a monomer or a dimer and forms supercomplexes (SCs) in the inner mitochondrial membrane with ubiquinol-cytochrome c oxidoreductase (cytochrome b-c1 complex, complex III, CIII).

Its subcellular location is the mitochondrion inner membrane. It functions in the pathway energy metabolism; oxidative phosphorylation. Component of the cytochrome c oxidase, the last enzyme in the mitochondrial electron transport chain which drives oxidative phosphorylation. The respiratory chain contains 3 multisubunit complexes succinate dehydrogenase (complex II, CII), ubiquinol-cytochrome c oxidoreductase (cytochrome b-c1 complex, complex III, CIII) and cytochrome c oxidase (complex IV, CIV), that cooperate to transfer electrons derived from NADH and succinate to molecular oxygen, creating an electrochemical gradient over the inner membrane that drives transmembrane transport and the ATP synthase. Cytochrome c oxidase is the component of the respiratory chain that catalyzes the reduction of oxygen to water. Electrons originating from reduced cytochrome c in the intermembrane space (IMS) are transferred via the dinuclear copper A center (CU(A)) of subunit 2 and heme A of subunit 1 to the active site in subunit 1, a binuclear center (BNC) formed by heme A3 and copper B (CU(B)). The BNC reduces molecular oxygen to 2 water molecules using 4 electrons from cytochrome c in the IMS and 4 protons from the mitochondrial matrix. The sequence is that of Cytochrome c oxidase subunit 7 (cox7) from Schizosaccharomyces pombe (strain 972 / ATCC 24843) (Fission yeast).